A 138-amino-acid polypeptide reads, in one-letter code: Large ribosomal subunit protein uL16 (138 aa).

Positions 1 to 13 are enriched in basic residues; it reads MLQPKRRKYRKEQ. The interval 1 to 24 is disordered; the sequence is MLQPKRRKYRKEQKGRNTGKATRG.

The protein belongs to the universal ribosomal protein uL16 family. As to quaternary structure, part of the 50S ribosomal subunit.

Binds 23S rRNA and is also seen to make contacts with the A and possibly P site tRNAs. The chain is Large ribosomal subunit protein uL16 from Cupriavidus necator (strain ATCC 17699 / DSM 428 / KCTC 22496 / NCIMB 10442 / H16 / Stanier 337) (Ralstonia eutropha).